The following is a 177-amino-acid chain: MEVSRYLCSYLISFLLFLFHSETACHPLGKRPCRMQAFRIWDVNQKTFYLRNNQLVAGYLQGPNTKLEEKIDVVPVEPHFVFLGIHGGKLCLSCVKSGDEMKLQLDAVNITDLRKNSEQDKRFTFIRSDSGPTTSFESAACPGWFLCTALEADQPVGLTNTPKAAVKVTKFYFQQDQ.

A signal peptide spans 1–25 (MEVSRYLCSYLISFLLFLFHSETAC). A disulfide bond links Cys91 and Cys141. Asn109 carries N-linked (GlcNAc...) asparagine glycosylation.

This sequence belongs to the IL-1 family.

It localises to the secreted. Its function is as follows. Anti-inflammatory antagonist of interleukin-1 family of proinflammatory cytokines such as interleukin-1beta/IL1B and interleukin-1alpha/IL1A. Protects from immune dysregulation and uncontrolled systemic inflammation triggered by IL1 for a range of innate stimulatory agents such as pathogens. This chain is Interleukin-1 receptor antagonist protein (IL1RN), found in Sus scrofa (Pig).